Reading from the N-terminus, the 744-residue chain is NADH-ubiquinone oxidoreductase 78 kDa subunit, mitochondrial (744 aa).

Positions Met-1–Ala-10 are enriched in polar residues. The interval Met-1–Phe-26 is disordered. Residues Met-1–Pro-33 constitute a mitochondrion transit peptide. In terms of domain architecture, 2Fe-2S ferredoxin-type spans Ala-34–Leu-112. [2Fe-2S] cluster contacts are provided by Cys-68, Cys-79, Cys-82, and Cys-96. The region spanning Leu-112 to Gly-151 is the 4Fe-4S His(Cys)3-ligated-type domain. [4Fe-4S] cluster-binding residues include His-128, Cys-132, Cys-135, Cys-141, Cys-182, Cys-185, Cys-188, and Cys-232. The 4Fe-4S Mo/W bis-MGD-type domain occupies Leu-251–Arg-307.

Belongs to the complex I 75 kDa subunit family. In terms of assembly, complex I is composed of about 40 different subunits. The cofactor is [2Fe-2S] cluster. Requires [4Fe-4S] cluster as cofactor.

It localises to the mitochondrion inner membrane. It carries out the reaction a ubiquinone + NADH + 5 H(+)(in) = a ubiquinol + NAD(+) + 4 H(+)(out). Functionally, core subunit of the mitochondrial membrane respiratory chain NADH dehydrogenase (Complex I) that is believed to belong to the minimal assembly required for catalysis. Complex I functions in the transfer of electrons from NADH to the respiratory chain. The immediate electron acceptor for the enzyme is believed to be ubiquinone. This is the largest subunit of complex I and it is a component of the iron-sulfur (IP) fragment of the enzyme. It may form part of the active site crevice where NADH is oxidized. The polypeptide is NADH-ubiquinone oxidoreductase 78 kDa subunit, mitochondrial (nuo78) (Neurospora crassa (strain ATCC 24698 / 74-OR23-1A / CBS 708.71 / DSM 1257 / FGSC 987)).